We begin with the raw amino-acid sequence, 645 residues long: Zinc finger protein 235 (645 aa).

The 79-residue stretch at 8–86 (VTFRDVAVVF…TSHDVNKLAR (79 aa)) folds into the KRAB domain. 2 disordered regions span residues 112–144 (GAEQPSQAPEDDGCLENLPSNHSSSSDNQEFLS) and 255–280 (KKSPVHSTHKDTRHSPSVPIQPSVHP). Residues 129-144 (LPSNHSSSSDNQEFLS) show a composition bias toward polar residues. C2H2-type zinc fingers lie at residues 285-307 (YWCHECGKGFRQSSALQTHQRVH), 313-335 (YRCDSCGKGFSRSSDLNIHRRVH), 341-363 (YKCEVCGKGFTQWAHLQAHERIH), 369-391 (YKCGDCGKRFSCSSNLHTHQRVH), 397-419 (YECNECGKRFSLSGNLDIHQRVH), 425-447 (YKCEECGKGFSSASSFQSHQRVH), 453-475 (FHCSVCGKNFSRSSHFLDHQRIH), 481-503 (YRCEVCGKRFPWSLSLHSHQSVH), 509-531 (YKCGECGKGFSHASSLQAHHSVH), 537-559 (FKCNVCQKQFSKTSNLQAHQRVH), 565-587 (YKCDTCGKAFSQKSSLQVHQRIH), 593-615 (FKCEECGKEFRWSVGLSSHQRVH), and 621-643 (YTCQQCGKGFSQASYFHMHQRVH).

It belongs to the krueppel C2H2-type zinc-finger protein family.

It localises to the nucleus. May be involved in transcriptional regulation. The polypeptide is Zinc finger protein 235 (Znf235) (Mus musculus (Mouse)).